The sequence spans 642 residues: Threonine--tRNA ligase (642 aa).

The 61-residue stretch at 1–61 folds into the TGS domain; that stretch reads MPVIRFCDGS…TEDSSISFIS (61 aa). A catalytic region spans residues 243–534; it reads DHRKIGKLLN…LIEEFSGKLP (292 aa). 3 residues coordinate Zn(2+): C334, H385, and H511.

Belongs to the class-II aminoacyl-tRNA synthetase family. In terms of assembly, homodimer. Zn(2+) serves as cofactor.

It is found in the cytoplasm. The enzyme catalyses tRNA(Thr) + L-threonine + ATP = L-threonyl-tRNA(Thr) + AMP + diphosphate + H(+). In terms of biological role, catalyzes the attachment of threonine to tRNA(Thr) in a two-step reaction: L-threonine is first activated by ATP to form Thr-AMP and then transferred to the acceptor end of tRNA(Thr). Also edits incorrectly charged L-seryl-tRNA(Thr). This chain is Threonine--tRNA ligase, found in Buchnera aphidicola subsp. Schizaphis graminum (strain Sg).